Consider the following 256-residue polypeptide: MLNIGPFSFHSRLLLGTGKFPDFDVQQKAIDVSEAEVLTFAVRRMDIFDAKQPNLLEKLDVKKYKLLPNTAGAKNAEEAVRIAKLAKASGLCDMIKVEVIGDDRTLLPDPVETLRASEMLLEEGFIVLPYTSDDVVLARKLQELGVHAIMPGASPIGSGLGIVNPLNLSFIIEQATVPVIVDAGIGSPADAAFAMELGADGVLLNTAVSGAKDPIKMAQAMKLSIEAGRLGFEAGRIARKRCATASSPLEGMSVVE.

The Schiff-base intermediate with DXP role is filled by Lys-96. 1-deoxy-D-xylulose 5-phosphate-binding positions include Gly-157, 183–184 (AG), and 205–206 (NT).

The protein belongs to the ThiG family. Homotetramer. Forms heterodimers with either ThiH or ThiS.

The protein resides in the cytoplasm. The catalysed reaction is [ThiS sulfur-carrier protein]-C-terminal-Gly-aminoethanethioate + 2-iminoacetate + 1-deoxy-D-xylulose 5-phosphate = [ThiS sulfur-carrier protein]-C-terminal Gly-Gly + 2-[(2R,5Z)-2-carboxy-4-methylthiazol-5(2H)-ylidene]ethyl phosphate + 2 H2O + H(+). The protein operates within cofactor biosynthesis; thiamine diphosphate biosynthesis. Catalyzes the rearrangement of 1-deoxy-D-xylulose 5-phosphate (DXP) to produce the thiazole phosphate moiety of thiamine. Sulfur is provided by the thiocarboxylate moiety of the carrier protein ThiS. In vitro, sulfur can be provided by H(2)S. This Bacillus anthracis protein is Thiazole synthase.